Reading from the N-terminus, the 36-residue chain is Neurotoxin PRTx26An0C3 (36 aa).

3 cysteine pairs are disulfide-bonded: Cys-3–Cys-17, Cys-10–Cys-22, and Cys-16–Cys-34.

As to expression, expressed by the venom gland.

Its subcellular location is the secreted. Its function is as follows. Neurotoxin. Causes spastic paralysis and death in mice. Moderate inhibitor of L-type calcium channels (Cav1/CACNA1). This chain is Neurotoxin PRTx26An0C3, found in Phoneutria nigriventer (Brazilian armed spider).